Here is a 312-residue protein sequence, read N- to C-terminus: Malate dehydrogenase (312 aa).

Residues 12–17 (GAGFTG) and Asp36 contribute to the NAD(+) site. The substrate site is built by Arg87 and Arg93. NAD(+) contacts are provided by residues Asn100 and 123–125 (LTN). Asn125 serves as a coordination point for substrate. Ser149 is subject to Phosphoserine. Substrate is bound at residue Arg156. His180 (proton acceptor) is an active-site residue.

The protein belongs to the LDH/MDH superfamily. MDH type 3 family.

The catalysed reaction is (S)-malate + NAD(+) = oxaloacetate + NADH + H(+). Catalyzes the reversible oxidation of malate to oxaloacetate. The chain is Malate dehydrogenase from Bacillus anthracis (strain A0248).